The chain runs to 425 residues: Xyloglucan O-acetyltransferase 2 (425 aa).

At 1 to 18 (MGSPFKDHHTLHPSLVRK) the chain is on the cytoplasmic side. Residues 19-38 (LIPWTFYAMVPLVLFRVYLY) traverse the membrane as a helical; Signal-anchor for type II membrane protein segment. Over 39 to 425 (PYPLHHTTTT…KWEYASRREQ (387 aa)) the chain is Lumenal. 4 disulfide bridges follow: Cys-68–Cys-118, Cys-89–Cys-154, Cys-98–Cys-398, and Cys-313–Cys-394. The N-linked (GlcNAc...) asparagine glycan is linked to Asn-85. Positions 141-143 (GDS) match the GDS motif motif. The Nucleophile role is filled by Ser-143. 2 N-linked (GlcNAc...) asparagine glycosylation sites follow: Asn-183 and Asn-259. The active-site Proton donor is the Asp-393. The DXXH motif signature appears at 393 to 396 (DCVH). His-396 acts as the Proton acceptor in catalysis.

The protein belongs to the PC-esterase family. TBL subfamily.

It localises to the golgi apparatus membrane. In terms of biological role, xyloglucan acetyltransferase that catalyzes the acetylation of fucosylated Gal residues on xyloglucan side chains. Predominantly catalyze 6-O-monoacetylation of Gal residues in the Fuc-Gal-Xyl trisaccharide side chains of xyloglucan oligomers. In Populus trichocarpa (Western balsam poplar), this protein is Xyloglucan O-acetyltransferase 2.